Here is a 299-residue protein sequence, read N- to C-terminus: Small ribosomal subunit protein uS2 (299 aa).

Residues 210–299 form a disordered region; the sequence is AEKEEQTQVV…GAATDNSWAS (90 aa). Residues 275-285 are compositionally biased toward polar residues; the sequence is WASTGTATVGP.

Belongs to the universal ribosomal protein uS2 family. In terms of assembly, component of the small ribosomal subunit. Mature ribosomes consist of a small (40S) and a large (60S) subunit. The 40S subunit contains about 33 different proteins and 1 molecule of RNA (18S). The 60S subunit contains about 49 different proteins and 3 molecules of RNA (28S, 5.8S and 5S). Interacts with ribosomal protein S21.

The protein resides in the cytoplasm. Its function is as follows. Required for the assembly and/or stability of the 40S ribosomal subunit. Required for the processing of the 20S rRNA-precursor to mature 18S rRNA in a late step of the maturation of 40S ribosomal subunits. The sequence is that of Small ribosomal subunit protein uS2 from Ornithodoros parkeri (Soft tick).